The sequence spans 89 residues: Signal recognition particle 19 kDa protein (89 aa).

The protein belongs to the SRP19 family. Part of the signal recognition particle protein translocation system, which is composed of SRP and FtsY. Archaeal SRP consists of a 7S RNA molecule of 300 nucleotides and two protein subunits: SRP54 and SRP19.

It is found in the cytoplasm. In terms of biological role, involved in targeting and insertion of nascent membrane proteins into the cytoplasmic membrane. Binds directly to 7S RNA and mediates binding of the 54 kDa subunit of the SRP. The protein is Signal recognition particle 19 kDa protein of Methanococcus maripaludis (strain C7 / ATCC BAA-1331).